A 152-amino-acid polypeptide reads, in one-letter code: uncharacterized protein (152 aa).

The next 5 helical transmembrane spans lie at 2–22 (GVVFAFGFYLIFIKLTGLKLM), 33–53 (LKMIFSILSVILAFLINWLIM), 58–78 (FLIEIIHPIASVWIFIILIYL), 97–117 (FMGNMSAIAIFLELLKIIEYV), and 122–142 (IASPITVALVFFIPVVVFFNC).

The protein localises to the cell membrane. This is an uncharacterized protein from Methanocaldococcus jannaschii (strain ATCC 43067 / DSM 2661 / JAL-1 / JCM 10045 / NBRC 100440) (Methanococcus jannaschii).